Here is a 238-residue protein sequence, read N- to C-terminus: MLVIPAVDMKNKKCVQLIQGNPDKKHVELDNPPEIAKKWVNEGAEMLHLVDLDGALDGKRVNDEFIEEIIKTSGVPVQIGGGIRSIEDAVYLVEKGAKKVIIGTVAVENPEIIKELSEKIGSEKIMVSLDAKNGKVVIKGWKEKTKYTPVEIGKILEEMGAGSILFTNVDSEGLLNGINIEPTKELVDNLKIPIVASGGVTTIDDLLKFKEIGVYGVVVGSAIYKNLINLKDAIEAVK.

The active-site Proton acceptor is Asp8. Asp130 functions as the Proton donor in the catalytic mechanism.

Belongs to the HisA/HisF family.

The protein resides in the cytoplasm. The catalysed reaction is 1-(5-phospho-beta-D-ribosyl)-5-[(5-phospho-beta-D-ribosylamino)methylideneamino]imidazole-4-carboxamide = 5-[(5-phospho-1-deoxy-D-ribulos-1-ylimino)methylamino]-1-(5-phospho-beta-D-ribosyl)imidazole-4-carboxamide. It participates in amino-acid biosynthesis; L-histidine biosynthesis; L-histidine from 5-phospho-alpha-D-ribose 1-diphosphate: step 4/9. The chain is 1-(5-phosphoribosyl)-5-[(5-phosphoribosylamino)methylideneamino] imidazole-4-carboxamide isomerase from Methanococcus maripaludis (strain C6 / ATCC BAA-1332).